Consider the following 117-residue polypeptide: Large ribosomal subunit protein uL18 (117 aa).

Belongs to the universal ribosomal protein uL18 family. Part of the 50S ribosomal subunit; part of the 5S rRNA/L5/L18/L25 subcomplex. Contacts the 5S and 23S rRNAs.

This is one of the proteins that bind and probably mediate the attachment of the 5S RNA into the large ribosomal subunit, where it forms part of the central protuberance. The protein is Large ribosomal subunit protein uL18 of Photobacterium profundum (strain SS9).